The following is a 242-amino-acid chain: Protein LST7 (242 aa).

Residues 48-212 (SCLLQFPEES…NKSKFGRNLV (165 aa)) enclose the uDENN FLCN/SMCR8-type domain.

Functionally, required for the nitrogen-regulated transport of amino acid permeases GAP1 and PUT4 from the Golgi to the cell surface. This chain is Protein LST7 (LST7), found in Saccharomyces cerevisiae (strain ATCC 204508 / S288c) (Baker's yeast).